The chain runs to 91 residues: Sm-like protein LSM6A (91 aa).

The 73-residue stretch at 14–86 folds into the Sm domain; it reads TPADFLKSIR…VLYISTVNMT (73 aa).

The protein belongs to the snRNP Sm proteins family. Component of the heptameric LSM1-LSM7 complex that forms a seven-membered ring structure with a donut shape. The LSM subunits are arranged in the order LSM1, LSM2, LSM3, LSM6, LSM5, LSM7 and LSM4. Component of the heptameric LSM2-LSM8 complex that forms a seven-membered ring structure with a donut shape. The LSM subunits are arranged in the order LSM8, LSM2, LSM3, LSM6, LSM5, LSM7 and LSM4. LSM6A subunit interacts only with its two neighboring subunits, LSM3A or LSM3B and LSM5. In terms of tissue distribution, expressed in roots, leaves, stems, flowers and siliques.

Its subcellular location is the cytoplasm. The protein localises to the nucleus. Component of LSM protein complexes, which are involved in RNA processing. Component of the cytoplasmic LSM1-LSM7 complex which is involved in mRNA degradation by promoting decapping and leading to accurate 5'-3' mRNA decay. The cytoplasmic LSM1-LSM7 complex regulates developmental gene expression by the decapping of specific development-related transcripts. Component of the nuclear LSM2-LSM8 complex which is involved splicing nuclear mRNAs. LSM2-LSM8 binds directly to the U6 small nuclear RNAs (snRNAs) and is essential for accurate splicing of selected development-related mRNAs through the stabilization of the spliceosomal U6 snRNA. Plays a critical role in the regulation of development-related gene expression. The chain is Sm-like protein LSM6A from Arabidopsis thaliana (Mouse-ear cress).